We begin with the raw amino-acid sequence, 292 residues long: Large ribosomal subunit protein bL19m (292 aa).

The disordered stretch occupies residues Ser-41–Pro-60. Phosphoserine is present on Ser-77.

This sequence belongs to the bacterial ribosomal protein bL19 family. As to quaternary structure, component of the mitochondrial ribosome large subunit (39S) which comprises a 16S rRNA and about 50 distinct proteins.

Its subcellular location is the mitochondrion. This Mus musculus (Mouse) protein is Large ribosomal subunit protein bL19m (Mrpl19).